The sequence spans 215 residues: Uracil phosphoribosyltransferase (215 aa).

Residues Arg-84, Arg-109, and 136 to 144 contribute to the 5-phospho-alpha-D-ribose 1-diphosphate site; that span reads DPMLATGNT. Residues Ile-198 and 203–205 contribute to the uracil site; that span reads GDA. Asp-204 contacts 5-phospho-alpha-D-ribose 1-diphosphate.

This sequence belongs to the UPRTase family. The cofactor is Mg(2+).

It carries out the reaction UMP + diphosphate = 5-phospho-alpha-D-ribose 1-diphosphate + uracil. Its pathway is pyrimidine metabolism; UMP biosynthesis via salvage pathway; UMP from uracil: step 1/1. Allosterically activated by GTP. Catalyzes the conversion of uracil and 5-phospho-alpha-D-ribose 1-diphosphate (PRPP) to UMP and diphosphate. The polypeptide is Uracil phosphoribosyltransferase (Methanothermobacter thermautotrophicus (strain ATCC 29096 / DSM 1053 / JCM 10044 / NBRC 100330 / Delta H) (Methanobacterium thermoautotrophicum)).